We begin with the raw amino-acid sequence, 382 residues long: Flap endonuclease 1 (382 aa).

Residues methionine 1–arginine 104 form an N-domain region. Position 34 (aspartate 34) interacts with Mg(2+). DNA contacts are provided by arginine 47 and arginine 70. Positions 86, 158, 160, 179, and 181 each coordinate Mg(2+). The tract at residues glutamate 122 to histidine 253 is I-domain. Glutamate 158 contributes to the DNA binding site. Residues glycine 231 and aspartate 233 each contribute to the DNA site. Position 233 (aspartate 233) interacts with Mg(2+). Positions threonine 336–phenylalanine 344 are interaction with PCNA. Positions lysine 359–lysine 368 are enriched in basic and acidic residues. Residues lysine 359–lysine 382 are disordered. A compositionally biased stretch (basic residues) spans lysine 369–lysine 382.

This sequence belongs to the XPG/RAD2 endonuclease family. FEN1 subfamily. In terms of assembly, interacts with PCNA. Three molecules of crn-1 bind to one PCNA trimer with each molecule binding to one PCNA monomer. PCNA stimulates the nuclease activity without altering cleavage specificity. Mg(2+) is required as a cofactor. Phosphorylated. Phosphorylation upon DNA damage induces relocalization to the nuclear plasma.

Its subcellular location is the nucleus. It localises to the nucleolus. The protein resides in the nucleoplasm. The protein localises to the mitochondrion. Its function is as follows. Structure-specific nuclease with 5'-flap endonuclease and 5'-3' exonuclease activities involved in DNA replication and repair. During DNA replication, cleaves the 5'-overhanging flap structure that is generated by displacement synthesis when DNA polymerase encounters the 5'-end of a downstream Okazaki fragment. It enters the flap from the 5'-end and then tracks to cleave the flap base, leaving a nick for ligation. Also involved in the long patch base excision repair (LP-BER) pathway, by cleaving within the apurinic/apyrimidinic (AP) site-terminated flap. Acts as a genome stabilization factor that prevents flaps from equilibrating into structures that lead to duplications and deletions. Also possesses 5'-3' exonuclease activity on nicked or gapped double-stranded DNA, and exhibits RNase H activity. Also involved in replication and repair of rDNA and in repairing mitochondrial DNA. The chain is Flap endonuclease 1 from Caenorhabditis briggsae.